The following is a 247-amino-acid chain: Mast cell protease 2 (247 aa).

An N-terminal signal peptide occupies residues 1 to 18; the sequence is MQALLFLMALLLPSGAGA. A propeptide spans 19–20 (activation peptide); the sequence is EE. The Peptidase S1 domain occupies 21–244; the sequence is IIGGVESIPH…YVPWINAVIN (224 aa). A disulfide bridge connects residues cysteine 50 and cysteine 66. Active-site charge relay system residues include histidine 65 and aspartate 109. 2 disulfide bridges follow: cysteine 143–cysteine 208 and cysteine 174–cysteine 187. The active-site Charge relay system is the serine 202.

This sequence belongs to the peptidase S1 family. Granzyme subfamily.

In terms of biological role, this enzyme, isolated from small intestine, specifically inactivates the apo forms of a certain group of intracellular pyridoxal phosphate-requiring enzymes. It has chymotrypsin-like specificity towards small substrates. This chain is Mast cell protease 2 (Mcpt2), found in Rattus norvegicus (Rat).